Here is a 457-residue protein sequence, read N- to C-terminus: Phosphomethylpyrimidine synthase (457 aa).

Substrate-binding positions include Asn80, Met109, Tyr139, His175, 195–197, 236–239, and Glu275; these read SRG and DSLR. His279 serves as a coordination point for Zn(2+). A substrate-binding site is contributed by Tyr302. Residue His343 coordinates Zn(2+). 3 residues coordinate [4Fe-4S] cluster: Cys423, Cys426, and Cys431.

It belongs to the ThiC family. It depends on [4Fe-4S] cluster as a cofactor.

The catalysed reaction is 5-amino-1-(5-phospho-beta-D-ribosyl)imidazole + S-adenosyl-L-methionine = 4-amino-2-methyl-5-(phosphooxymethyl)pyrimidine + CO + 5'-deoxyadenosine + formate + L-methionine + 3 H(+). It participates in cofactor biosynthesis; thiamine diphosphate biosynthesis. Its function is as follows. Catalyzes the synthesis of the hydroxymethylpyrimidine phosphate (HMP-P) moiety of thiamine from aminoimidazole ribotide (AIR) in a radical S-adenosyl-L-methionine (SAM)-dependent reaction. The chain is Phosphomethylpyrimidine synthase from Trichormus variabilis (strain ATCC 29413 / PCC 7937) (Anabaena variabilis).